The sequence spans 200 residues: NAD(P)H dehydrogenase (quinone) (200 aa).

Residues 4 to 191 enclose the Flavodoxin-like domain; sequence VLVLYYSSYG…DIARYQGKHV (188 aa). FMN-binding positions include 10–15 and 79–81; these read SSYGHV and TRF. Tyr12 serves as a coordination point for NAD(+). Trp99 serves as a coordination point for substrate. FMN is bound by residues 114 to 120 and His135; that span reads STGTQHG.

It belongs to the WrbA family. Requires FMN as cofactor.

It carries out the reaction a quinone + NADH + H(+) = a quinol + NAD(+). It catalyses the reaction a quinone + NADPH + H(+) = a quinol + NADP(+). In Burkholderia vietnamiensis (strain G4 / LMG 22486) (Burkholderia cepacia (strain R1808)), this protein is NAD(P)H dehydrogenase (quinone).